Consider the following 549-residue polypeptide: Alpha-amylase (549 aa).

An N-terminal signal peptide occupies residues 1–34; it reads MLTFHRIIRKGWMFLLAFLLTALLFCPTGQPAKA. 6 residues coordinate Ca(2+): aspartate 139, aspartate 196, alanine 218, aspartate 220, aspartate 231, and aspartate 237. Na(+) is bound at residue aspartate 196. Residues aspartate 220, aspartate 231, aspartate 237, and leucine 238 each contribute to the Na(+) site. Aspartate 239 contributes to the Ca(2+) binding site. The active-site Nucleophile is the aspartate 268. Position 272 (histidine 272) interacts with Ca(2+). Residue glutamate 298 is the Proton donor of the active site. Ca(2+)-binding residues include glycine 337, phenylalanine 339, serine 440, aspartate 441, and aspartate 464.

It belongs to the glycosyl hydrolase 13 family. In terms of assembly, monomer. Requires Ca(2+) as cofactor. The cofactor is Na(+).

It localises to the secreted. It carries out the reaction Endohydrolysis of (1-&gt;4)-alpha-D-glucosidic linkages in polysaccharides containing three or more (1-&gt;4)-alpha-linked D-glucose units.. This chain is Alpha-amylase (amyS), found in Geobacillus stearothermophilus (Bacillus stearothermophilus).